Consider the following 176-residue polypeptide: NAD(P)H-quinone oxidoreductase subunit J (176 aa).

The segment at 1-32 (MEKEGLAKSSDTSIKKEGFISQSLSKDGIPNQ) is disordered. The span at 20-32 (ISQSLSKDGIPNQ) shows a compositional bias: polar residues.

The protein belongs to the complex I 30 kDa subunit family. NDH-1 can be composed of about 15 different subunits; different subcomplexes with different compositions have been identified which probably have different functions.

The protein localises to the cellular thylakoid membrane. It catalyses the reaction a plastoquinone + NADH + (n+1) H(+)(in) = a plastoquinol + NAD(+) + n H(+)(out). The catalysed reaction is a plastoquinone + NADPH + (n+1) H(+)(in) = a plastoquinol + NADP(+) + n H(+)(out). NDH-1 shuttles electrons from an unknown electron donor, via FMN and iron-sulfur (Fe-S) centers, to quinones in the respiratory and/or the photosynthetic chain. The immediate electron acceptor for the enzyme in this species is believed to be plastoquinone. Couples the redox reaction to proton translocation, and thus conserves the redox energy in a proton gradient. Cyanobacterial NDH-1 also plays a role in inorganic carbon-concentration. This Prochlorococcus marinus (strain MIT 9215) protein is NAD(P)H-quinone oxidoreductase subunit J.